Reading from the N-terminus, the 179-residue chain is Inner membrane-spanning protein YciB (179 aa).

5 helical membrane-spanning segments follow: residues 3-23, 49-69, 76-96, 119-139, and 149-169; these read FLYDLFPVILFFIVYKLFGIY, NALIMSGVIIVVFGGATLWLQ, WKPTILYWVFTVGLLGSQWLF, LNLAWAIFFLLLGFLNLYVAY, and FKLFGTMGLMFVFVIGQTLLL.

This sequence belongs to the YciB family.

It localises to the cell inner membrane. In terms of biological role, plays a role in cell envelope biogenesis, maintenance of cell envelope integrity and membrane homeostasis. This is Inner membrane-spanning protein YciB from Methylobacillus flagellatus (strain ATCC 51484 / DSM 6875 / VKM B-1610 / KT).